The chain runs to 394 residues: NADH dehydrogenase [ubiquinone] iron-sulfur protein 2 (394 aa).

Polar residues predominate over residues 1–16 (MTTKNRQIKNFTSNFG). The tract at residues 1–22 (MTTKNRQIKNFTSNFGPQHPAA) is disordered.

It belongs to the complex I 49 kDa subunit family. As to quaternary structure, complex I is composed of about 45 different subunits. This is a component of the iron-sulfur (IP) fragment of the enzyme.

Its subcellular location is the mitochondrion. It carries out the reaction a ubiquinone + NADH + 5 H(+)(in) = a ubiquinol + NAD(+) + 4 H(+)(out). Its function is as follows. Core subunit of the mitochondrial membrane respiratory chain NADH dehydrogenase (Complex I) that is believed to belong to the minimal assembly required for catalysis. Complex I functions in the transfer of electrons from NADH to the respiratory chain. The immediate electron acceptor for the enzyme is believed to be ubiquinone. Component of the iron-sulfur (IP) fragment of the enzyme. The sequence is that of NADH dehydrogenase [ubiquinone] iron-sulfur protein 2 (NAD7) from Nicotiana sylvestris (Wood tobacco).